The sequence spans 481 residues: Xylulose kinase (481 aa).

81–82 provides a ligand contact to substrate; that stretch reads QH. Asp239 serves as the catalytic Proton acceptor.

It belongs to the FGGY kinase family.

The catalysed reaction is D-xylulose + ATP = D-xylulose 5-phosphate + ADP + H(+). Its function is as follows. Catalyzes the phosphorylation of D-xylulose to D-xylulose 5-phosphate. This is Xylulose kinase from Streptomyces rubiginosus.